The sequence spans 201 residues: Small ribosomal subunit protein uS5 (201 aa).

Positions 1–27 (MAGPQRRGSGAGGGERRDRKGRDGGAA) are disordered. A compositionally biased stretch (basic and acidic residues) spans 14 to 23 (GERRDRKGRD). The 64-residue stretch at 34–97 (YVERVVAINR…EEAKKHFFKV (64 aa)) folds into the S5 DRBM domain.

Belongs to the universal ribosomal protein uS5 family. In terms of assembly, part of the 30S ribosomal subunit. Contacts proteins S4 and S8.

Its function is as follows. With S4 and S12 plays an important role in translational accuracy. In terms of biological role, located at the back of the 30S subunit body where it stabilizes the conformation of the head with respect to the body. The sequence is that of Small ribosomal subunit protein uS5 from Streptomyces avermitilis (strain ATCC 31267 / DSM 46492 / JCM 5070 / NBRC 14893 / NCIMB 12804 / NRRL 8165 / MA-4680).